The chain runs to 413 residues: Arginine biosynthesis bifunctional protein ArgJ (413 aa).

Residues threonine 163, lysine 189, threonine 200, glutamate 286, asparagine 408, and threonine 413 each contribute to the substrate site. The Nucleophile role is filled by threonine 200.

Belongs to the ArgJ family. Heterotetramer of two alpha and two beta chains.

The protein resides in the cytoplasm. It catalyses the reaction N(2)-acetyl-L-ornithine + L-glutamate = N-acetyl-L-glutamate + L-ornithine. The catalysed reaction is L-glutamate + acetyl-CoA = N-acetyl-L-glutamate + CoA + H(+). It functions in the pathway amino-acid biosynthesis; L-arginine biosynthesis; L-ornithine and N-acetyl-L-glutamate from L-glutamate and N(2)-acetyl-L-ornithine (cyclic): step 1/1. Its pathway is amino-acid biosynthesis; L-arginine biosynthesis; N(2)-acetyl-L-ornithine from L-glutamate: step 1/4. Catalyzes two activities which are involved in the cyclic version of arginine biosynthesis: the synthesis of N-acetylglutamate from glutamate and acetyl-CoA as the acetyl donor, and of ornithine by transacetylation between N(2)-acetylornithine and glutamate. The protein is Arginine biosynthesis bifunctional protein ArgJ of Staphylococcus aureus (strain Mu50 / ATCC 700699).